Here is a 347-residue protein sequence, read N- to C-terminus: Gas vesicle ATPase GvpN1 (347 aa).

The segment covering 1-11 has biased composition (basic residues); it reads MTNESRKRKVR. Residues 1 to 64 form a disordered region; that stretch reads MTNESRKRKV…EGFVPEEQSF (64 aa). The span at 18 to 55 shows a compositional bias: basic and acidic residues; the sequence is SRGDKKQGRSQSRDDKEIERLERQNDARGQESSTHVDE. An ATP-binding site is contributed by 91–98; the sequence is GPTGCGKT.

This sequence belongs to the CbbQ/NirQ/NorQ/GpvN family. Forms homodimers, forms a GvpN1-GvpO1 heterodimer, interacts with GvpC1 (via the latter's C-terminus) and GvpL, might interact with GvpA1.

Its subcellular location is the gas vesicle. It localises to the cytoplasm. It carries out the reaction ATP + H2O = ADP + phosphate + H(+). An ATPase that functions in gas vesicle formation. A minor component of the gas vesicle, also found in soluble extracts. Probably enhances gas vesicle formation. Gas vesicles are hollow, gas filled proteinaceous nanostructures found in several microbial planktonic microorganisms. They allow positioning of halobacteria at the optimal depth for growth in the poorly aerated, shallow brine pools of their habitat. Functionally, expression of a 9.5 kb p-vac DNA fragment containing 2 divergently transcribed regions (gvpD-gvpE-gvpF-gvpG-gvpH-gvpI-gvpJ-gvpK-gvpL-gvpM and gvpA-gvpC-gvpN-gvpO) allows H.volcanii to produce gas vesicles. A similar region restores gas vesicle production in H.halobium without the p-vac locus, but which still have the c-vac locus. The polypeptide is Gas vesicle ATPase GvpN1 (gvpN11) (Halobacterium salinarum (strain ATCC 700922 / JCM 11081 / NRC-1) (Halobacterium halobium)).